A 42-amino-acid chain; its full sequence is Protein Tat (42 aa).

Residues 1–24 (MEPVDPNLEPWNHPGSQPKTACNQ) are interaction with human CREBBP. The segment at 22 to 37 (CNQCYCKKCSYHCLVC) is cysteine-rich. Residue K28 is modified to N6-acetyllysine; by host PCAF.

This sequence belongs to the lentiviruses Tat family. Interacts with host CCNT1. Associates with the P-TEFb complex composed at least of Tat, P-TEFb (CDK9 and CCNT1), TAR RNA, RNA Pol II. Recruits the HATs CREBBP, TAF1/TFIID, EP300, PCAF and GCN5L2. Interacts with host KAT5/Tip60; this interaction targets the latter to degradation. Interacts with the host deacetylase SIRT1. Interacts with host capping enzyme RNGTT; this interaction stimulates RNGTT. Binds to host KDR, and to the host integrins ITGAV/ITGB3 and ITGA5/ITGB1. Interacts with host KPNB1/importin beta-1 without previous binding to KPNA1/importin alpha-1. Interacts with EIF2AK2. Interacts with host nucleosome assembly protein NAP1L1; this interaction may be required for the transport of Tat within the nucleus, since the two proteins interact at the nuclear rim. Interacts with host C1QBP/SF2P32; this interaction involves lysine-acetylated Tat. Interacts with the host chemokine receptors CCR2, CCR3 and CXCR4. Interacts with host DPP4/CD26; this interaction may trigger an anti-proliferative effect. Interacts with host LDLR. Interacts with the host extracellular matrix metalloproteinase MMP1. Interacts with host PRMT6; this interaction mediates Tat's methylation. Interacts with, and is ubiquitinated by MDM2/Hdm2. Interacts with host PSMC3 and HTATIP2. Interacts with STAB1; this interaction may overcome SATB1-mediated repression of IL2 and IL2RA (interleukin) in T cells by binding to the same domain than HDAC1. Interacts (when acetylated) with human CDK13, thereby increasing HIV-1 mRNA splicing and promoting the production of the doubly spliced HIV-1 protein Nef. Interacts with host TBP; this interaction modulates the activity of transcriptional pre-initiation complex. Interacts with host RELA. Interacts with host PLSCR1; this interaction negatively regulates Tat transactivation activity by altering its subcellular distribution. Phosphorylated by EIF2AK2 on serine and threonine residues adjacent to the basic region important for TAR RNA binding and function. Phosphorylation of Tat by EIF2AK2 is dependent on the prior activation of EIF2AK2 by dsRNA. In terms of processing, asymmetrical arginine methylation by host PRMT6 seems to diminish the transactivation capacity of Tat and affects the interaction with host CCNT1. Post-translationally, polyubiquitination by host MDM2 does not target Tat to degradation, but activates its transactivation function and fosters interaction with CCNT1 and TAR RNA.

The protein localises to the host nucleus. Its subcellular location is the host nucleolus. It is found in the host cytoplasm. The protein resides in the secreted. In terms of biological role, transcriptional activator that increases RNA Pol II processivity, thereby increasing the level of full-length viral transcripts. Recognizes a hairpin structure at the 5'-LTR of the nascent viral mRNAs referred to as the transactivation responsive RNA element (TAR) and recruits the cyclin T1-CDK9 complex (P-TEFb complex) that will in turn hyperphosphorylate the RNA polymerase II to allow efficient elongation. The CDK9 component of P-TEFb and other Tat-activated kinases hyperphosphorylate the C-terminus of RNA Pol II that becomes stabilized and much more processive. Other factors such as HTATSF1/Tat-SF1, SUPT5H/SPT5, and HTATIP2 are also important for Tat's function. Besides its effect on RNA Pol II processivity, Tat induces chromatin remodeling of proviral genes by recruiting the histone acetyltransferases (HATs) CREBBP, EP300 and PCAF to the chromatin. This also contributes to the increase in proviral transcription rate, especially when the provirus integrates in transcriptionally silent region of the host genome. To ensure maximal activation of the LTR, Tat mediates nuclear translocation of NF-kappa-B by interacting with host RELA. Through its interaction with host TBP, Tat may also modulate transcription initiation. Tat can reactivate a latently infected cell by penetrating in it and transactivating its LTR promoter. In the cytoplasm, Tat is thought to act as a translational activator of HIV-1 mRNAs. Functionally, extracellular circulating Tat can be endocytosed by surrounding uninfected cells via the binding to several surface receptors such as CD26, CXCR4, heparan sulfate proteoglycans (HSPG) or LDLR. Neurons are rarely infected, but they internalize Tat via their LDLR. Through its interaction with nuclear HATs, Tat is potentially able to control the acetylation-dependent cellular gene expression. Modulates the expression of many cellular genes involved in cell survival, proliferation or in coding for cytokines or cytokine receptors. Tat plays a role in T-cell and neurons apoptosis. Tat induced neurotoxicity and apoptosis probably contribute to neuroAIDS. Circulating Tat also acts as a chemokine-like and/or growth factor-like molecule that binds to specific receptors on the surface of the cells, affecting many cellular pathways. In the vascular system, Tat binds to ITGAV/ITGB3 and ITGA5/ITGB1 integrins dimers at the surface of endothelial cells and competes with bFGF for heparin-binding sites, leading to an excess of soluble bFGF. This Human immunodeficiency virus type 1 group M subtype C (isolate ETH2220) (HIV-1) protein is Protein Tat.